The sequence spans 285 residues: Transcription factor E2F6 (285 aa).

A Glycyl lysine isopeptide (Lys-Gly) (interchain with G-Cter in SUMO2) cross-link involves residue Lys-9. A DNA-binding region spans residues 50–129 (YVSMRKALKV…SKNHIRWIGS (80 aa)). The DEF box signature appears at 95–129 (KLGVRKRRVYDITNVLDGIDLVEKKSKNHIRWIGS). Residues 130–222 (DLSNFGAVPQ…PAPKEDSITV (93 aa)) form a dimerization region. The segment at 143–164 (LQEELSDLSAMEDALDELIKDC) is leucine-zipper. Positions 173–285 (DDKENERLAY…QSEEVLEVSN (113 aa)) are transcription repression. The interval 240 to 285 (QGSHSSNKTSDNVGTSSSKSKPLEHPQPEKEENPPQQSEEVLEVSN) is disordered. Over residues 241 to 259 (GSHSSNKTSDNVGTSSSKS) the composition is skewed to polar residues. Basic and acidic residues predominate over residues 260 to 272 (KPLEHPQPEKEEN).

This sequence belongs to the E2F/DP family. As to quaternary structure, forms heterodimers with DP family members TFDP1 or TFDP2. Component of the DRTF1/E2F transcription factor complex. Part of the E2F6.com-1 complex in G0 phase composed of E2F6, MGA, MAX, TFDP1, CBX3, BAT8, EUHMTASE1, RING1, RNF2, MBLR, L3MBTL2 and YAF2. Component of some MLL1/MLL complex, at least composed of the core components KMT2A/MLL1, ASH2L, HCFC1/HCF1, WDR5 and RBBP5, as well as the facultative components BACC1, CHD8, E2F6, HSP70, INO80C, KANSL1, LAS1L, MAX, MCRS1, MGA, KAT8/MOF, PELP1, PHF20, PRP31, RING2, RUVB1/TIP49A, RUVB2/TIP49B, SENP3, TAF1, TAF4, TAF6, TAF7, TAF9 and TEX10.

It localises to the nucleus. Its function is as follows. Inhibitor of E2F-dependent transcription. Binds DNA cooperatively with DP proteins through the E2 recognition site, 5'-TTTC[CG]CGC-3'. Has a preference for the 5'-TTTCCCGC-3' E2F recognition site. E2F6 lacks the transcriptional activation and pocket protein binding domains. Appears to regulate a subset of E2F-dependent genes whose products are required for entry into the cell cycle but not for normal cell cycle progression. Represses expression of some meiosis-specific genes, including SLC25A31/ANT4. May silence expression via the recruitment of a chromatin remodeling complex containing histone H3-K9 methyltransferase activity. Overexpression delays the exit of cells from the S-phase. This chain is Transcription factor E2F6, found in Bos taurus (Bovine).